Reading from the N-terminus, the 71-residue chain is Pro-MCH (71 aa).

Residues 1–20 form the signal peptide; that stretch reads AKMNLSSYILILTFSLFSQG.

This sequence belongs to the melanin-concentrating hormone family.

It is found in the secreted. This is Pro-MCH (PMCH) from Hylobates lar (Lar gibbon).